The chain runs to 732 residues: Zinc/cadmium/lead-transporting P-type ATPase (732 aa).

At 1–124 (MSTPDNHGKK…QAAEEPQASR (124 aa)) the chain is on the cytoplasmic side. The 65-residue stretch at 48–112 (TRYSWKVSGM…ALQKAGYSLR (65 aa)) folds into the HMA domain. Zn(2+) contacts are provided by D58, C59, and C62. A helical membrane pass occupies residues 125–145 (LKENLPLITLIVMMAISWGLE). Q146 is a topological domain (periplasmic). Residues 147 to 167 (FNHPFGQLAFIATTLVGLYPI) form a helical membrane-spanning segment. The Cytoplasmic segment spans residues 168–179 (ARQALRLIKSGS). Residues 180–197 (YFAIETLMSVAAIGALFI) traverse the membrane as a helical segment. At 198-202 (GATAE) the chain is on the periplasmic side. The helical transmembrane segment at 203–222 (AAMVLLLFLIGERLEGWAAS) threads the bilayer. At 223 to 356 (RARQGVSALM…IDRFSRIYTP (134 aa)) the chain is on the cytoplasmic side. Residues 357–377 (AIMAVALLVTLVPPLLFAASW) form a helical membrane-spanning segment. Topologically, residues 378–383 (QEWIYK) are periplasmic. The helical transmembrane segment at 384–404 (GLTLLLIGCPCALVISTPAAI) threads the bilayer. 2 residues coordinate Zn(2+): C392 and C394. Residues 405-685 (TSGLAAAARR…RATHANIRQN (281 aa)) lie on the Cytoplasmic side of the membrane. D436 serves as the catalytic 4-aspartylphosphate intermediate. 3 residues coordinate Mg(2+): D436, T438, and D628. The helical transmembrane segment at 686–702 (ITIALGLKGIFLVTTLL) threads the bilayer. Over 703–707 (GMTGL) the chain is Periplasmic. A helical membrane pass occupies residues 708–729 (WLAVLADTGATVLVTANALRLL). D714 provides a ligand contact to Zn(2+). The Cytoplasmic segment spans residues 730 to 732 (RRR).

The protein belongs to the cation transport ATPase (P-type) (TC 3.A.3) family. Type IB subfamily.

It localises to the cell inner membrane. The enzyme catalyses Pb(2+)(in) + ATP + H2O = Pb(2+)(out) + ADP + phosphate + H(+). It carries out the reaction Zn(2+)(in) + ATP + H2O = Zn(2+)(out) + ADP + phosphate + H(+). The catalysed reaction is Cd(2+)(in) + ATP + H2O = Cd(2+)(out) + ADP + phosphate + H(+). Inhibited by orthovanadate. Confers resistance to zinc, cadmium and lead. Couples the hydrolysis of ATP with the export of zinc, cadmium or lead, with highest activity when the metals are present as metal-thiolate complexes. Can also bind nickel, copper, cobalt and mercury. The protein is Zinc/cadmium/lead-transporting P-type ATPase of Escherichia coli (strain K12).